Here is a 147-residue protein sequence, read N- to C-terminus: uncharacterized protein (147 aa).

One can recognise an HTH LytTR-type domain in the interval L44 to I147.

The protein localises to the cytoplasm. This is an uncharacterized protein from Staphylococcus aureus (strain Mu50 / ATCC 700699).